Here is a 130-residue protein sequence, read N- to C-terminus: Cytidine deaminase (130 aa).

Residues Val-3–Ser-130 form the CMP/dCMP-type deaminase domain. Position 43–45 (Asn-43–Glu-45) interacts with substrate. Cys-54 is a Zn(2+) binding site. The active-site Proton donor is Glu-56. Cys-88 and Cys-91 together coordinate Zn(2+).

This sequence belongs to the cytidine and deoxycytidylate deaminase family. Homodimer. Zn(2+) is required as a cofactor.

The catalysed reaction is cytidine + H2O + H(+) = uridine + NH4(+). It catalyses the reaction 2'-deoxycytidine + H2O + H(+) = 2'-deoxyuridine + NH4(+). Functionally, this enzyme scavenges exogenous and endogenous cytidine and 2'-deoxycytidine for UMP synthesis. This Mycoplasma genitalium (strain ATCC 33530 / DSM 19775 / NCTC 10195 / G37) (Mycoplasmoides genitalium) protein is Cytidine deaminase (cdd).